A 1169-amino-acid chain; its full sequence is Chromosome partition protein Smc (1169 aa).

Position 32–39 (32–39 (PNGSGKSN)) interacts with ATP. Positions 166 to 507 (DEISGIAEFD…RIKALKEMEE (342 aa)) form a coiled coil. The SMC hinge domain occupies 523 to 636 (PGIIDIVGNL…ENIDIAKELA (114 aa)). Residues 676 to 1030 (SKLNKIADEI…NKKKEVFMEV (355 aa)) are a coiled coil.

This sequence belongs to the SMC family. In terms of assembly, homodimer.

The protein localises to the cytoplasm. Its function is as follows. Required for chromosome condensation and partitioning. In Methanocaldococcus jannaschii (strain ATCC 43067 / DSM 2661 / JAL-1 / JCM 10045 / NBRC 100440) (Methanococcus jannaschii), this protein is Chromosome partition protein Smc.